A 956-amino-acid chain; its full sequence is Zinc finger CCHC domain-containing protein 14 (956 aa).

8 disordered regions span residues 25–50 (SSLN…PSGA), 78–99 (ALHT…GKHG), 206–229 (SSSS…KVGA), 243–276 (GIPS…GTGS), 361–464 (KEKS…EKEK), 485–505 (PVQN…PQLM), 543–583 (LEER…QGLS), and 750–786 (FYSG…PQPA). The segment covering 29–43 (SGGGGGGGGGGGGKS) has biased composition (gly residues). 2 stretches are compositionally biased toward low complexity: residues 206–225 (SSSS…PSLP) and 246–265 (SSQS…SASL). Polar residues predominate over residues 369 to 389 (LNSSAPSLVTSSGVARVTPTS). Positions 423–432 (SSEYSSSSSS) are enriched in low complexity. Basic and acidic residues predominate over residues 438–464 (VREESSDSAEESDRRVDIHVEGTEKEK). Positions 750–768 (FYSGGAGSSSPGNIPASSQ) are enriched in low complexity. The CCHC-type zinc-finger motif lies at 913–930 (LSCYNCGATGHRAQDCKQ).

The protein is Zinc finger CCHC domain-containing protein 14 (Zcchc14) of Mus musculus (Mouse).